The primary structure comprises 54 residues: Large ribosomal subunit protein bL32 (54 aa).

Residues 1-54 (MAVQQNRKTRSRRGMRRSHDALTAAQLSVDSTSGETHRRHHVTADGYYRGKKVI) form a disordered region. Over residues 7–16 (RKTRSRRGMR) the composition is skewed to basic residues. Over residues 25-34 (AQLSVDSTSG) the composition is skewed to polar residues.

The protein belongs to the bacterial ribosomal protein bL32 family.

This is Large ribosomal subunit protein bL32 from Tolumonas auensis (strain DSM 9187 / NBRC 110442 / TA 4).